The sequence spans 400 residues: Argininosuccinate synthase (400 aa).

ATP contacts are provided by residues 10–18 (AYSGGVDTS) and Ala-38. Residue Tyr-89 coordinates L-citrulline. An ATP-binding site is contributed by Gly-119. Residues Thr-121, Asn-125, and Asp-126 each coordinate L-aspartate. Asn-125 contributes to the L-citrulline binding site. L-citrulline contacts are provided by Arg-129, Ser-177, Ser-186, Glu-262, and Tyr-274.

Belongs to the argininosuccinate synthase family. Type 1 subfamily. In terms of assembly, homotetramer.

The protein localises to the cytoplasm. The enzyme catalyses L-citrulline + L-aspartate + ATP = 2-(N(omega)-L-arginino)succinate + AMP + diphosphate + H(+). Its pathway is amino-acid biosynthesis; L-arginine biosynthesis; L-arginine from L-ornithine and carbamoyl phosphate: step 2/3. The chain is Argininosuccinate synthase from Prochlorococcus marinus (strain NATL2A).